The following is a 264-amino-acid chain: Cysteine-rich repeat secretory protein 26 (264 aa).

Positions 1 to 27 (MSSNIFGSVPILVVVAIQLLLVHNVSS) are cleaved as a signal peptide. Gnk2-homologous domains lie at 34–142 (YLNH…SVDS) and 148–261 (YKRM…LYPF).

It belongs to the cysteine-rich repeat secretory protein family.

Its subcellular location is the secreted. The protein is Cysteine-rich repeat secretory protein 26 (CRRSP26) of Arabidopsis thaliana (Mouse-ear cress).